Consider the following 383-residue polypeptide: Trichodiene synthase (383 aa).

The protein belongs to the trichodiene synthase family.

The catalysed reaction is (2E,6E)-farnesyl diphosphate = trichodiene + diphosphate. Its pathway is sesquiterpene biosynthesis; trichothecene biosynthesis. Functionally, TS is a member of the terpene cyclase group of enzymes. It catalyzes the isomerization and cyclization of farnesyl pyro-phosphate to form trichodiene, the first cyclic intermediate in the biosynthetic pathway for trichothecenes. It serves to branch trichothecene biosynthesis from the isoprenoid pathway. The polypeptide is Trichodiene synthase (TRI5) (Stachybotrys chartarum (Toxic black mold)).